Here is a 353-residue protein sequence, read N- to C-terminus: 3-isopropylmalate dehydrogenase (353 aa).

NAD(+) is bound at residue 73–86; the sequence is GPQYDTLDRPLRPE. 4 residues coordinate substrate: R93, R103, R131, and D220. Mg(2+) contacts are provided by D220, D244, and D248. Residue 278 to 290 coordinates NAD(+); that stretch reads GSAPDIAGKNLAN.

The protein belongs to the isocitrate and isopropylmalate dehydrogenases family. LeuB type 1 subfamily. In terms of assembly, homodimer. Mg(2+) is required as a cofactor. Mn(2+) serves as cofactor.

The protein resides in the cytoplasm. The enzyme catalyses (2R,3S)-3-isopropylmalate + NAD(+) = 4-methyl-2-oxopentanoate + CO2 + NADH. Its pathway is amino-acid biosynthesis; L-leucine biosynthesis; L-leucine from 3-methyl-2-oxobutanoate: step 3/4. Its function is as follows. Catalyzes the oxidation of 3-carboxy-2-hydroxy-4-methylpentanoate (3-isopropylmalate) to 3-carboxy-4-methyl-2-oxopentanoate. The product decarboxylates to 4-methyl-2 oxopentanoate. The chain is 3-isopropylmalate dehydrogenase from Thiobacillus denitrificans (strain ATCC 25259 / T1).